The primary structure comprises 488 residues: Altronate oxidoreductase (488 aa).

18 to 29 contributes to the NAD(+) binding site; it reads VIQFGEGNFLRA.

This sequence belongs to the mannitol dehydrogenase family. UxaB subfamily.

It carries out the reaction D-altronate + NAD(+) = keto-D-tagaturonate + NADH + H(+). Its pathway is carbohydrate metabolism; pentose and glucuronate interconversion. In Pectobacterium carotovorum subsp. carotovorum (strain PC1), this protein is Altronate oxidoreductase.